The following is a 314-amino-acid chain: Lysophospholipase D GDPD1 (314 aa).

Residues 1–3 (MSS) lie on the Extracellular side of the membrane. The chain crosses the membrane as a helical span at residues 4–24 (TAAFYLLSTLGGYLVTSFLLL). At 25–195 (KYPTLLHQRK…VEKCYKENSD (171 aa)) the chain is on the cytoplasmic side. Residues 40–309 (SKHISHRGGA…DYPTKLRDFL (270 aa)) form the GP-PDE domain. 3 residues coordinate a divalent metal cation: Glu72, Asp74, and His87. Residues 196–216 (IPILFSLQRVLLILGLFFTGL) form a helical membrane-spanning segment. Topologically, residues 217–314 (LPFVPIREQF…LRDFLHNFSA (98 aa)) are extracellular.

This sequence belongs to the glycerophosphoryl diester phosphodiesterase family. As to expression, widely expressed with high expression level in testis.

Its subcellular location is the cytoplasm. It localises to the membrane. The protein localises to the perinuclear region. The protein resides in the endoplasmic reticulum. It carries out the reaction a 1-O-alkyl-sn-glycero-3-phosphocholine + H2O = a 1-O-alkyl-sn-glycero-3-phosphate + choline + H(+). It catalyses the reaction 1-hexadecanoyl-sn-glycero-3-phosphocholine + H2O = 1-hexadecanoyl-sn-glycero-3-phosphate + choline + H(+). The enzyme catalyses N-hexadecanoyl-sn-glycero-3-phosphoethanolamine + H2O = N-hexadecanoylethanolamine + sn-glycerol 3-phosphate + H(+). The catalysed reaction is N-(5Z,8Z,11Z,14Z-eicosatetraenoyl)-1-(9Z-octadecenoyl)-sn-glycero-3-phosphoethanolamine + H2O = N-(5Z,8Z,11Z,14Z-eicosatetraenoyl)-ethanolamine + 1-(9Z-octadecenoyl)-sn-glycero-3-phosphate + H(+). It carries out the reaction N,1-di-(9Z-octadecenoyl)-sn-glycero-3-phosphoethanolamine + H2O = N-(9Z-octadecenoyl) ethanolamine + 1-(9Z-octadecenoyl)-sn-glycero-3-phosphate + H(+). It catalyses the reaction N-hexadecanoyl-1-(9Z-octadecenoyl)-sn-glycero-3-phosphoethanolamine + H2O = N-hexadecanoylethanolamine + 1-(9Z-octadecenoyl)-sn-glycero-3-phosphate + H(+). The enzyme catalyses 1-O-(1Z-octadecenyl)-sn-glycero-3-phospho-N-hexadecanoyl-ethanolamine + H2O = 1-O-(1Z-octadecenyl)-sn-glycero-3-phosphate + N-hexadecanoylethanolamine + H(+). The catalysed reaction is 1-hexadecanoyl-sn-glycero-3-phosphoethanolamine + H2O = 1-hexadecanoyl-sn-glycero-3-phosphate + ethanolamine + H(+). It carries out the reaction 1-O-hexadecyl-sn-glycero-3-phosphocholine + H2O = 1-O-hexadecyl-sn-glycero-3-phosphate + choline + H(+). It catalyses the reaction 1-(9Z-octadecenoyl)-sn-glycero-3-phosphocholine + H2O = 1-(9Z-octadecenoyl)-sn-glycero-3-phosphate + choline + H(+). The enzyme catalyses N,1-dihexadecanoyl-sn-glycero-3-phosphoethanolamine + H2O = N-hexadecanoylethanolamine + 1-hexadecanoyl-sn-glycero-3-phosphate + H(+). The catalysed reaction is 1-O-(1Z-octadecenyl)-sn-glycero-3-phospho-(N-5Z,8Z,11Z,14Z-eicosatetraenoyl)-ethanolamine + H2O = 1-O-(1Z-octadecenyl)-sn-glycero-3-phosphate + N-(5Z,8Z,11Z,14Z-eicosatetraenoyl)-ethanolamine + H(+). It carries out the reaction 1-O-(1Z-octadecenyl)-sn-glycero-3-phospho-(N-9Z-octadecenoyl)-ethanolamine + H2O = 1-O-(1Z-octadecenyl)-sn-glycero-3-phosphate + N-(9Z-octadecenoyl) ethanolamine + H(+). With respect to regulation, lysophospholipase D activity is increased by magnesium and manganese and inhibited by calcium in a concentration dependent manner. Loss of lysophospholipase D activity by addition of EDTA. Hydrolyzes lysoglycerophospholipids to produce lysophosphatidic acid (LPA) and the corresponding amines. Shows a preference for 1-O-alkyl-sn-glycero-3-phosphocholine (lyso-PAF), lysophosphatidylethanolamine (lyso-PE) and lysophosphatidylcholine (lyso-PC). May be involved in bioactive N-acylethanolamine biosynthesis from both N-acyl-lysoplasmenylethanolamin (N-acyl-lysoPlsEt) and N-acyl-lysophosphatidylethanolamin (N-acyl-lysoPE). In addition, hydrolyzes glycerophospho-N-acylethanolamine to N-acylethanolamine. Does not display glycerophosphodiester phosphodiesterase activity, since it cannot hydrolyze either glycerophosphoinositol or glycerophosphocholine. This is Lysophospholipase D GDPD1 from Homo sapiens (Human).